The following is a 227-amino-acid chain: Orotate phosphoribosyltransferase (227 aa).

5-phospho-alpha-D-ribose 1-diphosphate is bound by residues K51, R119, K120, and K123. Orotate-binding residues include T149 and R177.

It belongs to the purine/pyrimidine phosphoribosyltransferase family. PyrE subfamily. In terms of assembly, homodimer. In terms of tissue distribution, expressed in body wall muscles, spermatheca and vulva muscles.

The enzyme catalyses orotidine 5'-phosphate + diphosphate = orotate + 5-phospho-alpha-D-ribose 1-diphosphate. It catalyses the reaction UMP + diphosphate = 5-phospho-alpha-D-ribose 1-diphosphate + uracil. Its pathway is pyrimidine metabolism; UMP biosynthesis via de novo pathway; UMP from orotate: step 1/2. It functions in the pathway pyrimidine metabolism; UMP biosynthesis via salvage pathway; UMP from uracil: step 1/1. Functionally, phosphoribosyltransferase which catalyzes the formation of UMP from uracil in vitro and thus may be involved in UMP biosynthesis via the salvage pathway. May also participate in the first step of UMP synthesis by catalyzing the formation of orotidine 5'-phosphate, a UMP precursor, from orotate. In Caenorhabditis elegans, this protein is Orotate phosphoribosyltransferase.